Here is a 669-residue protein sequence, read N- to C-terminus: Translation factor GUF1, mitochondrial (669 aa).

The N-terminal 49 residues, methionine 1–tyrosine 49, are a transit peptide targeting the mitochondrion. Positions glutamate 66–lysine 247 constitute a tr-type G domain. GTP-binding positions include alanine 75–serine 82, aspartate 140–histidine 144, and asparagine 194–aspartate 197.

The protein belongs to the TRAFAC class translation factor GTPase superfamily. Classic translation factor GTPase family. LepA subfamily.

It is found in the mitochondrion inner membrane. It carries out the reaction GTP + H2O = GDP + phosphate + H(+). Promotes mitochondrial protein synthesis. May act as a fidelity factor of the translation reaction, by catalyzing a one-codon backward translocation of tRNAs on improperly translocated ribosomes. Binds to mitochondrial ribosomes in a GTP-dependent manner. In Homo sapiens (Human), this protein is Translation factor GUF1, mitochondrial.